Consider the following 181-residue polypeptide: UPF0232 protein SAV_4320 (181 aa).

Residues 1-10 show a composition bias toward polar residues; it reads MSDTPAQTPE. Disordered regions lie at residues 1 to 64 and 156 to 181; these read MSDT…GRDP and QGPG…DTYG. Residues 30–39 show a composition bias toward basic and acidic residues; it reads AAKEQARARG.

It belongs to the UPF0232 family.

The protein is UPF0232 protein SAV_4320 of Streptomyces avermitilis (strain ATCC 31267 / DSM 46492 / JCM 5070 / NBRC 14893 / NCIMB 12804 / NRRL 8165 / MA-4680).